A 474-amino-acid polypeptide reads, in one-letter code: Glycogen synthase (474 aa).

Position 15 (Lys-15) interacts with ADP-alpha-D-glucose.

The protein belongs to the glycosyltransferase 1 family. Bacterial/plant glycogen synthase subfamily.

It catalyses the reaction [(1-&gt;4)-alpha-D-glucosyl](n) + ADP-alpha-D-glucose = [(1-&gt;4)-alpha-D-glucosyl](n+1) + ADP + H(+). It participates in glycan biosynthesis; glycogen biosynthesis. In terms of biological role, synthesizes alpha-1,4-glucan chains using ADP-glucose. This chain is Glycogen synthase, found in Chlamydia trachomatis serovar L2b (strain UCH-1/proctitis).